The chain runs to 209 residues: Ribosomal RNA large subunit methyltransferase E (209 aa).

5 residues coordinate S-adenosyl-L-methionine: Gly-63, Trp-65, Asp-83, Asp-99, and Asp-124. Lys-164 functions as the Proton acceptor in the catalytic mechanism.

This sequence belongs to the class I-like SAM-binding methyltransferase superfamily. RNA methyltransferase RlmE family.

Its subcellular location is the cytoplasm. The enzyme catalyses uridine(2552) in 23S rRNA + S-adenosyl-L-methionine = 2'-O-methyluridine(2552) in 23S rRNA + S-adenosyl-L-homocysteine + H(+). Its function is as follows. Specifically methylates the uridine in position 2552 of 23S rRNA at the 2'-O position of the ribose in the fully assembled 50S ribosomal subunit. The polypeptide is Ribosomal RNA large subunit methyltransferase E (Vibrio vulnificus (strain CMCP6)).